We begin with the raw amino-acid sequence, 274 residues long: Ethanolamine ammonia-lyase small subunit (274 aa).

Adenosylcob(III)alamin is bound by residues Val-161, Glu-182, and Cys-211.

Belongs to the EutC family. The basic unit is a heterodimer which dimerizes to form tetramers. The heterotetramers trimerize; 6 large subunits form a core ring with 6 small subunits projecting outwards. It depends on adenosylcob(III)alamin as a cofactor.

It localises to the bacterial microcompartment. It carries out the reaction ethanolamine = acetaldehyde + NH4(+). It functions in the pathway amine and polyamine degradation; ethanolamine degradation. In terms of biological role, catalyzes the deamination of various vicinal amino-alcohols to oxo compounds. Allows this organism to utilize ethanolamine as the sole source of nitrogen and carbon in the presence of external vitamin B12. The polypeptide is Ethanolamine ammonia-lyase small subunit (Pseudomonas fluorescens (strain ATCC BAA-477 / NRRL B-23932 / Pf-5)).